We begin with the raw amino-acid sequence, 423 residues long: Divalent metal cation transporter MntH (423 aa).

The next 11 membrane-spanning stretches (helical) occupy residues 31 to 51 (LMML…GNFA), 58 to 78 (SSFG…AMLI), 116 to 136 (IIAI…FQLV), 137 to 157 (FGIS…MILI), 168 to 188 (VVIG…LFFA), 213 to 233 (AAGI…SALF), 254 to 274 (IAMV…AAVF), 302 to 322 (VLFG…GTMA), 342 to 362 (FITM…TDIL), 363 to 383 (VMSQ…LLIF), and 401 to 421 (YAGV…MVTL).

The protein belongs to the NRAMP family.

It is found in the cell inner membrane. H(+)-stimulated, divalent metal cation uptake system. The protein is Divalent metal cation transporter MntH of Vibrio campbellii (strain ATCC BAA-1116).